A 461-amino-acid chain; its full sequence is L-cystine uptake protein TcyP (461 aa).

A run of 10 helical transmembrane segments spans residues 1–21 (MTLF…LLYM), 33–53 (VFTA…IYGS), 72–92 (YVKL…LGAF), 104–124 (ISGL…AVGI), 183–203 (PTST…YLGV), 224–244 (IIMR…LAIM), 262–282 (FVIA…LLIT), 337–357 (LSIG…IMIA), 369–389 (FLFT…GVGG), and 393–413 (FAAL…GLLI).

The protein belongs to the dicarboxylate/amino acid:cation symporter (DAACS) (TC 2.A.23) family.

Its subcellular location is the membrane. Its function is as follows. Mediates uptake of L-cystine, the oxidized form of L-cysteine. The polypeptide is L-cystine uptake protein TcyP (tcyP) (Bacillus licheniformis (strain ATCC 14580 / DSM 13 / JCM 2505 / CCUG 7422 / NBRC 12200 / NCIMB 9375 / NCTC 10341 / NRRL NRS-1264 / Gibson 46)).